The following is a 345-amino-acid chain: MKVAIIGATGYGGIELIRLLEQHPYFSIASLHSFSQVGECITNVYPHLRNVLFHTLQEIDVKTIGKEAEIVFLATPAGVSAELTPKLVAEGLKVIDLSGDFRMIDPSSYELWYKRPAAKEEILRKAVYGLSEWKRTEIQKANLIANPGCFATATLLAIAPLIRSGMIEEDSIIIDAKSGVSGAGKTPTTMTHFPELYDNLHIYKVNQHQHVPEIEQMLTEWNSESQPITFSTHLIPISRGIMITLYAKVKQKMEIKQLQKLYEETYEQSPFIRICTQGKFPSPKEVRGSNYCDIGIAYDERTERVTVVSVIDNMMKGAAGQAIQNANIIAGLEETTGLQHMPLYL.

C149 is a catalytic residue.

Belongs to the NAGSA dehydrogenase family. Type 1 subfamily.

The protein localises to the cytoplasm. The enzyme catalyses N-acetyl-L-glutamate 5-semialdehyde + phosphate + NADP(+) = N-acetyl-L-glutamyl 5-phosphate + NADPH + H(+). It participates in amino-acid biosynthesis; L-arginine biosynthesis; N(2)-acetyl-L-ornithine from L-glutamate: step 3/4. Its function is as follows. Catalyzes the NADPH-dependent reduction of N-acetyl-5-glutamyl phosphate to yield N-acetyl-L-glutamate 5-semialdehyde. This is N-acetyl-gamma-glutamyl-phosphate reductase from Bacillus cereus (strain B4264).